Consider the following 877-residue polypeptide: Kinetochore null protein 2 (877 aa).

The SANTA domain maps to 20–107 (IRLNLWSMKF…SNGIPENWAD (88 aa)). Disordered regions lie at residues 122 to 315 (RPIQ…SKSV), 338 to 535 (FEST…ESLN), and 549 to 604 (MMFG…NDSI). Residues 153 to 211 (QKNSENEKERNRREREEQQTKERERRLEEEKQRRDAEAEAERRRKEEEELEEANYTLRA) adopt a coiled-coil conformation. Residues 156–199 (SENEKERNRREREEQQTKERERRLEEEKQRRDAEAEAERRRKEE) are compositionally biased toward basic and acidic residues. The span at 251–279 (IASSTPQQKQRLADGANNQIPPTQKSQDS) shows a compositional bias: polar residues. 3 stretches are compositionally biased toward basic and acidic residues: residues 359 to 385 (EPRH…DNSR), 394 to 444 (RRHE…RGRD), and 453 to 480 (VRFE…DYGR). Residues 491–549 (EDEEKLNAIVRREKELRNRLQKSQKASSSSYRHRSNSSDAEESLNEWDIENQELLDNSM) are a coiled coil. The segment covering 511–520 (QKSQKASSSS) has biased composition (low complexity). Positions 573–583 (RSKPANSTKSP) are enriched in polar residues. Basic and acidic residues predominate over residues 592 to 601 (ASLEDNRDLN). The Myb-like domain maps to 617 to 678 (VAKKITWRKQ…AITRLKWVEP (62 aa)). Disordered regions lie at residues 757–785 (RGGT…FNSP) and 808–877 (MQAR…TSIY). 2 stretches are compositionally biased toward polar residues: residues 775 to 785 (SRGNNSTFNSP) and 819 to 836 (SSSM…TSIS). A compositionally biased stretch (acidic residues) spans 856–871 (EDDENEDNDDDDDMRE).

This sequence belongs to the KNL2 family. In terms of assembly, interacts with hcp-3.

Its subcellular location is the nucleus. The protein resides in the chromosome. It localises to the centromere. The protein localises to the kinetochore. In terms of biological role, required for the recruitment of hcp-3, hcp-4, knl-1, bub-1 and lin-53 to kinetochores, kinetochore assembly, chromosome condensation and chromosome segregation in meiosis and mitosis. This Caenorhabditis elegans protein is Kinetochore null protein 2.